We begin with the raw amino-acid sequence, 180 residues long: Der GTPase-activating protein YihI (180 aa).

Disordered stretches follow at residues 1-90 and 145-180; these read MSRK…QERR and EPEE…DYKG. Over residues 23–32 the composition is skewed to basic and acidic residues; the sequence is NRTESDVEGR. Basic residues predominate over residues 33-43; sequence LRKRAKKRKGL. 2 stretches are compositionally biased toward basic and acidic residues: residues 50 to 68 and 80 to 90; these read SDAE…DPRL and PVKKQTKQERR. Residues 165-180 are compositionally biased toward acidic residues; sequence DLLADFDDINFDDYKG.

This sequence belongs to the YihI family. In terms of assembly, interacts with Der.

In terms of biological role, a GTPase-activating protein (GAP) that modifies Der/EngA GTPase function. May play a role in ribosome biogenesis. The polypeptide is Der GTPase-activating protein YihI (Vibrio campbellii (strain ATCC BAA-1116)).